The sequence spans 151 residues: Large-conductance mechanosensitive channel (151 aa).

The next 2 membrane-spanning stretches (helical) occupy residues 12-32 (GNIVDLAVAVVIGTAFTALVT) and 71-91 (VLLSAAINFFLIAFAVYFLVV). Positions 122 to 151 (AQTNGDSPGRHGGRGTPSPTDGPRASTESQ) are disordered.

Belongs to the MscL family. Homopentamer.

It localises to the cell membrane. In terms of biological role, channel that opens in response to stretch forces in the membrane lipid bilayer. May participate in the regulation of osmotic pressure changes within the cell. In Mycobacterium tuberculosis (strain CDC 1551 / Oshkosh), this protein is Large-conductance mechanosensitive channel.